The chain runs to 156 residues: Small ribosomal subunit protein uS7 (156 aa).

It belongs to the universal ribosomal protein uS7 family. Part of the 30S ribosomal subunit. Contacts proteins S9 and S11.

Functionally, one of the primary rRNA binding proteins, it binds directly to 16S rRNA where it nucleates assembly of the head domain of the 30S subunit. Is located at the subunit interface close to the decoding center, probably blocks exit of the E-site tRNA. This chain is Small ribosomal subunit protein uS7, found in Aliivibrio fischeri (strain MJ11) (Vibrio fischeri).